A 261-amino-acid polypeptide reads, in one-letter code: Ribonuclease HII (261 aa).

Residues 72–260 (AVICGIDEVG…IKSIVLEKLD (189 aa)) form the RNase H type-2 domain. The a divalent metal cation site is built by Asp78, Glu79, and Asp170.

This sequence belongs to the RNase HII family. It depends on Mn(2+) as a cofactor. Mg(2+) is required as a cofactor.

It is found in the cytoplasm. It catalyses the reaction Endonucleolytic cleavage to 5'-phosphomonoester.. In terms of biological role, endonuclease that specifically degrades the RNA of RNA-DNA hybrids. This is Ribonuclease HII from Staphylococcus carnosus (strain TM300).